The sequence spans 471 residues: Retinoic acid receptor RXR-beta-A (471 aa).

Positions Met-1–Met-34 are disordered. Residues Met-1–Lys-102 are modulating. The segment covering Pro-10 to Pro-25 has biased composition (low complexity). Positions Lys-122–Asp-197 form a DNA-binding region, nuclear receptor. 2 NR C4-type zinc fingers span residues Cys-125 to Cys-145 and Cys-161 to Cys-185. The span at Gln-196–Glu-216 shows a compositional bias: basic and acidic residues. Residues Gln-196–Glu-226 form a disordered region. The tract at residues Glu-198–Ser-221 is hinge. The NR LBD domain maps to Asn-224–Pro-467.

It belongs to the nuclear hormone receptor family. NR2 subfamily. Homodimer. Heterodimer; with a rar molecule. Binds DNA preferentially as a rar/rxr heterodimer. Heterodimerizes with rarga. In terms of tissue distribution, shows uniform expression from the blastula to mid-gastrula stages. At 12 hours post-fertilization (hpf), expressed ubiquitously but more weakly. At 24 hpf, restricted to the ventral diencephalon, pharangeal endoderm and trunk and tail mesoderm; mesoderm expression is in medial cells of each somite along the dorsoventral axis, forming stripes. At 48 hpf, expressed in forebrain, eye, midbrain and anterior hindbrain.

It is found in the nucleus. Its function is as follows. Receptor for retinoic acid. Retinoic acid receptors bind as heterodimers to their target response elements in response to their ligands, all-trans or 9-cis retinoic acid, and regulate gene expression in various biological processes. The rar/rxr heterodimers bind to the retinoic acid response elements (RARE) composed of tandem 5'-AGGTCA-3' sites known as DR1-DR5. The high affinity ligand for rxrs is 9-cis retinoic acid. This chain is Retinoic acid receptor RXR-beta-A (rxrba), found in Danio rerio (Zebrafish).